The sequence spans 251 residues: MPKRDLPWRSMPGTSKTSRNANYSPRARIGPRVDKASEWVHRPMYRKPRIYRTLRTADVPRGCEGPCKVQSYEQRHDISHVGKVMCISDVTRGNGITHRVGKRFCVKSVYILGKIWMDENIKLQNHTNSVMFWLVRDRRPYGTPMDFGHVFNMFDNEPSTATVKNDLRDRYQVLHKFYGKVTGGQYASNEQAIVKRFWKVNNHVVYNHQEAGKYENHTENALLLYMACTHASNPVYATLKIRIYFYDSLMN.

The segment at 1 to 27 (MPKRDLPWRSMPGTSKTSRNANYSPRA) is disordered. Positions 3-20 (KRDLPWRSMPGTSKTSRN) match the Bipartite nuclear localization signal motif. Positions 12-23 (PGTSKTSRNANY) are enriched in polar residues. The short motif at 35 to 49 (KASEWVHRPMYRKPR) is the Nuclear localization signal element. A zinc finger lies at 63–80 (CEGPCKVQSYEQRHDISH). The short motif at 96 to 117 (ITHRVGKRFCVKSVYILGKIWM) is the Nuclear export signal element. Residues 195–242 (KRFWKVNNHVVYNHQEAGKYENHTENALLLYMACTHASNPVYATLKIR) carry the Bipartite nuclear localization signal motif.

This sequence belongs to the geminiviridae capsid protein family. Homomultimer. Binds to single-stranded and double-stranded viral DNA. Interacts (via nuclear localization signals) with host importin alpha-1a.

It localises to the virion. The protein localises to the host nucleus. Encapsidates the viral DNA into characteristic twinned ('geminate') particles. Binds the genomic viral ssDNA and shuttles it into and out of the cell nucleus. The CP of bipartite geminiviruses is not required for cell-to-cell or systemic movement. The protein is Capsid protein of Abutilon (Upland cotton).